The sequence spans 130 residues: Chaperone protein SycT (130 aa).

As to quaternary structure, binds to YopT.

Functionally, functions as a specific chaperone for YopT. In Yersinia enterocolitica serotype O:8 / biotype 1B (strain NCTC 13174 / 8081), this protein is Chaperone protein SycT (sycT).